We begin with the raw amino-acid sequence, 332 residues long: tRNA dimethylallyltransferase (332 aa).

ATP is bound at residue 14 to 21 (GPTASGKT). 16 to 21 (TASGKT) is a substrate binding site. Positions 39–42 (DSMQ) are interaction with substrate tRNA. Residues 312–332 (NKRSSNHDCKRKHPRPSTREL) are disordered. The segment covering 320 to 332 (CKRKHPRPSTREL) has biased composition (basic residues).

Belongs to the IPP transferase family. As to quaternary structure, monomer. Mg(2+) serves as cofactor.

It catalyses the reaction adenosine(37) in tRNA + dimethylallyl diphosphate = N(6)-dimethylallyladenosine(37) in tRNA + diphosphate. In terms of biological role, catalyzes the transfer of a dimethylallyl group onto the adenine at position 37 in tRNAs that read codons beginning with uridine, leading to the formation of N6-(dimethylallyl)adenosine (i(6)A). This is tRNA dimethylallyltransferase from Staphylococcus epidermidis (strain ATCC 35984 / DSM 28319 / BCRC 17069 / CCUG 31568 / BM 3577 / RP62A).